The following is a 219-amino-acid chain: Probable GTP-binding protein EngB (219 aa).

In terms of domain architecture, EngB-type G spans 40 to 212 (LLPEIAFIGK…KASLAKCIIK (173 aa)). GTP contacts are provided by residues 48–55 (GKSNVGKS), 75–79 (GRTGQ), 93–96 (DLPG), 160–163 (TKFD), and 191–193 (VSS). Mg(2+) is bound by residues serine 55 and threonine 77.

The protein belongs to the TRAFAC class TrmE-Era-EngA-EngB-Septin-like GTPase superfamily. EngB GTPase family. Mg(2+) serves as cofactor.

In terms of biological role, necessary for normal cell division and for the maintenance of normal septation. The polypeptide is Probable GTP-binding protein EngB (Rickettsia canadensis (strain McKiel)).